The primary structure comprises 417 residues: Inhibitor of growth protein 3 (417 aa).

2 disordered regions span residues 128-203 and 286-320; these read TPSQ…YNTN and QTLSSSSTDSRSGRKSKNNNKSSSQQSSSSSSSSS. Basic residues predominate over residues 136-152; it reads HHAHSHTPVEKRKHNPS. The span at 156–168 shows a compositional bias: basic and acidic residues; the sequence is GATDHVPEKKFKS. Low complexity-rich tracts occupy residues 189–203, 286–295, and 307–320; these read NNNSSSSSNNAYNTN, QTLSSSSTDS, and SSSQQSSSSSSSSS. A PHD-type zinc finger spans residues 359 to 408; the sequence is PRYCICNQVSYGEMVGCDNQDCPIEWFHYGCVGLTEAPKGKWYCPQCTAA. Cysteine 362, cysteine 364, cysteine 375, cysteine 380, histidine 386, cysteine 389, cysteine 402, and cysteine 405 together coordinate Zn(2+).

It belongs to the ING family. As to quaternary structure, interacts with H3K4me3 and to a lesser extent with H3K4me2. Component of the NuA4 histone acetyltransferase complex.

It localises to the nucleus. Functionally, component of the NuA4 histone acetyltransferase (HAT) complex which is involved in transcriptional activation of select genes principally by acetylation of nucleosomal histone H4 and H2A. This modification may both alter nucleosome - DNA interactions and promote interaction of the modified histones with other proteins which positively regulate transcription. NuA4 may also play a direct role in DNA repair when directly recruited to sites of DNA damage. The sequence is that of Inhibitor of growth protein 3 (ING3) from Gallus gallus (Chicken).